The sequence spans 182 residues: Keratin, type II cytoskeletal 68 kDa, component IA (182 aa).

The region spanning 1-66 is the IF rod domain; that stretch reads DAEQHGEVAL…TLLEGEECRM (66 aa). The interval 1-66 is coil 2B; the sequence is DAEQHGEVAL…TLLEGEECRM (66 aa). The tract at residues 67–86 is H2 subdomain; the sequence is SGECQSSVSIEMVHNTTSSS. The interval 67-182 is tail; sequence SGECQSSVSI…SQSQRSHHKL (116 aa). The segment at 87–162 is V2 subdomain; that stretch reads SGGSGALGGG…GSCAVSGVGG (76 aa). The segment covering 104-124 has biased composition (gly residues); sequence GSGGLGSGSLGSGRLGSGGRG. The disordered stretch occupies residues 104-182; it reads GSGGLGSGSL…SQSQRSHHKL (79 aa). Low complexity-rich tracts occupy residues 144 to 158 and 165 to 176; these read VRGS…CAVS and SVRVTQSSSQSQ. Residues 163-182 form an E2 subdomain region; that stretch reads RGSVRVTQSSSQSQRSHHKL.

The protein belongs to the intermediate filament family. As to quaternary structure, heterotetramer of two type I and two type II keratins.

This chain is Keratin, type II cytoskeletal 68 kDa, component IA, found in Bos taurus (Bovine).